A 327-amino-acid chain; its full sequence is Methionyl-tRNA formyltransferase (327 aa).

(6S)-5,6,7,8-tetrahydrofolate is bound at residue 122-125 (SLLP).

The protein belongs to the Fmt family.

It carries out the reaction L-methionyl-tRNA(fMet) + (6R)-10-formyltetrahydrofolate = N-formyl-L-methionyl-tRNA(fMet) + (6S)-5,6,7,8-tetrahydrofolate + H(+). In terms of biological role, attaches a formyl group to the free amino group of methionyl-tRNA(fMet). The formyl group appears to play a dual role in the initiator identity of N-formylmethionyl-tRNA by promoting its recognition by IF2 and preventing the misappropriation of this tRNA by the elongation apparatus. The chain is Methionyl-tRNA formyltransferase from Ralstonia pickettii (strain 12J).